The primary structure comprises 233 residues: Ribosomal RNA small subunit methyltransferase G (233 aa).

Positions 1 to 25 (MASRQSPMAVSQPDHADRSAALQLT) are disordered. The S-adenosyl-L-methionine site is built by Gly-85, Phe-90, and Arg-155.

This sequence belongs to the methyltransferase superfamily. RNA methyltransferase RsmG family.

The protein resides in the cytoplasm. It catalyses the reaction guanosine(527) in 16S rRNA + S-adenosyl-L-methionine = N(7)-methylguanosine(527) in 16S rRNA + S-adenosyl-L-homocysteine. Functionally, specifically methylates the N7 position of guanine in position 527 of 16S rRNA. The polypeptide is Ribosomal RNA small subunit methyltransferase G (Rhodopseudomonas palustris (strain BisB5)).